The primary structure comprises 208 residues: V-type ATP synthase subunit D (208 aa).

The protein belongs to the V-ATPase D subunit family.

Functionally, produces ATP from ADP in the presence of a proton gradient across the membrane. This Chlamydia caviae (strain ATCC VR-813 / DSM 19441 / 03DC25 / GPIC) (Chlamydophila caviae) protein is V-type ATP synthase subunit D.